We begin with the raw amino-acid sequence, 364 residues long: Uroporphyrinogen decarboxylase (364 aa).

Substrate is bound by residues 28-32, D78, Y160, T215, and H333; that span reads RQAGR.

This sequence belongs to the uroporphyrinogen decarboxylase family. As to quaternary structure, homodimer.

It localises to the cytoplasm. The catalysed reaction is uroporphyrinogen III + 4 H(+) = coproporphyrinogen III + 4 CO2. It functions in the pathway porphyrin-containing compound metabolism; protoporphyrin-IX biosynthesis; coproporphyrinogen-III from 5-aminolevulinate: step 4/4. Catalyzes the decarboxylation of four acetate groups of uroporphyrinogen-III to yield coproporphyrinogen-III. This chain is Uroporphyrinogen decarboxylase, found in Burkholderia thailandensis (strain ATCC 700388 / DSM 13276 / CCUG 48851 / CIP 106301 / E264).